A 292-amino-acid polypeptide reads, in one-letter code: L-serine dehydratase, alpha chain (292 aa).

This sequence belongs to the iron-sulfur dependent L-serine dehydratase family. Heterooctamer of four alpha chains and four beta chains. Requires [4Fe-4S] cluster as cofactor.

It carries out the reaction L-serine = pyruvate + NH4(+). It participates in carbohydrate biosynthesis; gluconeogenesis. The protein is L-serine dehydratase, alpha chain (sdhA) of Peptoniphilus asaccharolyticus (Peptostreptococcus asaccharolyticus).